Here is a 217-residue protein sequence, read N- to C-terminus: 2-phospho-L-lactate guanylyltransferase (217 aa).

The protein belongs to the CofC family. Homodimer.

It catalyses the reaction (2S)-2-phospholactate + GTP + H(+) = (2S)-lactyl-2-diphospho-5'-guanosine + diphosphate. It functions in the pathway cofactor biosynthesis; coenzyme F420 biosynthesis. Its function is as follows. Guanylyltransferase that catalyzes the activation of (2S)-2-phospholactate (2-PL) as (2S)-lactyl-2-diphospho-5'-guanosine, via the condensation of 2-PL with GTP. It is involved in the biosynthesis of coenzyme F420, a hydride carrier cofactor. This chain is 2-phospho-L-lactate guanylyltransferase, found in Methanospirillum hungatei JF-1 (strain ATCC 27890 / DSM 864 / NBRC 100397 / JF-1).